The following is a 213-amino-acid chain: ATP synthase peripheral stalk subunit OSCP, mitochondrial (213 aa).

The transit peptide at 1–23 (MAAPAVSGLSRQVRCFSTSVVRP) directs the protein to the mitochondrion. Positions 5–23 (AVSGLSRQVRCFSTSVVRP) match the SIFI-degron motif. 4 positions are modified to N6-acetyllysine: Lys-54, Lys-60, Lys-70, and Lys-73. Lys-90 is modified (N6-succinyllysine). N6-acetyllysine; alternate is present on residues Lys-158 and Lys-162. N6-succinyllysine; alternate is present on residues Lys-158 and Lys-162. N6-acetyllysine occurs at positions 172, 176, and 192. Lys-199 carries the post-translational modification N6-succinyllysine.

It belongs to the ATPase delta chain family. In terms of assembly, component of the ATP synthase complex composed at least of ATP5F1A/subunit alpha, ATP5F1B/subunit beta, ATP5MC1/subunit c (homooctomer), MT-ATP6/subunit a, MT-ATP8/subunit 8, ATP5ME/subunit e, ATP5MF/subunit f, ATP5MG/subunit g, ATP5MK/subunit k, ATP5MJ/subunit j, ATP5F1C/subunit gamma, ATP5F1D/subunit delta, ATP5F1E/subunit epsilon, ATP5PF/subunit F6, ATP5PB/subunit b, ATP5PD/subunit d, ATP5PO/subunit OSCP. ATP synthase complex consists of a soluble F(1) head domain (subunits alpha(3) and beta(3)) - the catalytic core - and a membrane F(0) domain - the membrane proton channel (subunits c, a, 8, e, f, g, k and j). These two domains are linked by a central stalk (subunits gamma, delta, and epsilon) rotating inside the F1 region and a stationary peripheral stalk (subunits F6, b, d, and OSCP). Acetylation at Lys-162 decreases ATP production. Deacetylated by SIRT3. Post-translationally, in response to mitochondrial stress, the precursor protein is ubiquitinated by the SIFI complex in the cytoplasm before mitochondrial import, leading to its degradation. Within the SIFI complex, UBR4 initiates ubiquitin chain that are further elongated or branched by KCMF1.

It localises to the mitochondrion. The protein localises to the mitochondrion inner membrane. Subunit OSCP, of the mitochondrial membrane ATP synthase complex (F(1)F(0) ATP synthase or Complex V) that produces ATP from ADP in the presence of a proton gradient across the membrane which is generated by electron transport complexes of the respiratory chain. ATP synthase complex consist of a soluble F(1) head domain - the catalytic core - and a membrane F(1) domain - the membrane proton channel. These two domains are linked by a central stalk rotating inside the F(1) region and a stationary peripheral stalk. During catalysis, ATP synthesis in the catalytic domain of F(1) is coupled via a rotary mechanism of the central stalk subunits to proton translocation. In vivo, can only synthesize ATP although its ATP hydrolase activity can be activated artificially in vitro. Part of the complex F(0) domain. Part of the complex F(0) domain and the peripheric stalk, which acts as a stator to hold the catalytic alpha(3)beta(3) subcomplex and subunit a/ATP6 static relative to the rotary elements. The polypeptide is ATP synthase peripheral stalk subunit OSCP, mitochondrial (Homo sapiens (Human)).